Consider the following 407-residue polypeptide: MSGCPFLGGTLQLLSSNPRQAEEEDGSQGGVNKAAKGGIIYGDYLQLDKVLNAQVLQSEQKGNKIHDEHLFIVTHQAYELWFKQILWELDSVRDLFIKKHVRDERNMLKVVSRIHRITMIFKLLVDQFAVLETMTALDFFDFREYLSPASGFQSLQFRLLEQKIGVADHLRVPYNRRHYRDNFHGEESETLLSSEQEPTLLQLVEQWLERTPGLEKDGFNFWGKLQANIEEGLKREKHQVEKMEDTEVKQELLEDLNKQMETFTALFDSKRHEHLLSKGERRLSYKALQGALMINFYREEPRFQVPFQLLTALMEIDTLMTKWRYNHVCMVHRMIGSKAGTGGSSGYHYLRSTVSDRYKVFVDLFNLATFLVPRSWVPKLNPNIHKFPYTAECYDSSYNSCSSEDSD.

Substrate-binding positions include 71–75 (FIVTH) and Arg-143. His-327 serves as a coordination point for heme. Thr-341 is a binding site for substrate.

It belongs to the tryptophan 2,3-dioxygenase family. As to quaternary structure, homotetramer. Dimer of dimers. Heme is required as a cofactor.

The enzyme catalyses L-tryptophan + O2 = N-formyl-L-kynurenine. It functions in the pathway amino-acid degradation; L-tryptophan degradation via kynurenine pathway; L-kynurenine from L-tryptophan: step 1/2. Functionally, heme-dependent dioxygenase that catalyzes the oxidative cleavage of the L-tryptophan (L-Trp) pyrrole ring and converts L-tryptophan to N-formyl-L-kynurenine. Catalyzes the oxidative cleavage of the indole moiety. The chain is Tryptophan 2,3-dioxygenase B from Danio rerio (Zebrafish).